The primary structure comprises 173 residues: Mesencephalic astrocyte-derived neurotrophic factor homolog (173 aa).

Positions 1–22 are cleaved as a signal peptide; sequence MKTWHMVVVIGFLATLAQTSLA. Disulfide bonds link Cys28-Cys114, Cys31-Cys103, Cys61-Cys72, and Cys148-Cys151.

This sequence belongs to the ARMET family.

It is found in the secreted. Functionally, required during the maturation of the embryonic nervous system for maintenance of neuronal and cuticular connectivity. Essential for maintenance of dopaminergic neurons and dopamine levels. This Drosophila simulans (Fruit fly) protein is Mesencephalic astrocyte-derived neurotrophic factor homolog.